A 171-amino-acid chain; its full sequence is MEIILIKPVRKLGKIGDMLKVADGFGRNYLLPQKLAIRATEPNKELIVKQKHEFEAKDKQIREEVEKINALIKDQKLVFIRQTSDDGKLFGSVTNKEIADKLSENVSYNIAHSNIILDKQIKFTGIYTVEIRLHAELNAIVTVIVARSESEAQDYLREQKTETSEDLAESA.

This sequence belongs to the bacterial ribosomal protein bL9 family.

Its function is as follows. Binds to the 23S rRNA. In Rickettsia felis (strain ATCC VR-1525 / URRWXCal2) (Rickettsia azadi), this protein is Large ribosomal subunit protein bL9.